Here is a 209-residue protein sequence, read N- to C-terminus: Putative cardiolipin synthase (209 aa).

4 helical membrane passes run 27–47 (AFVY…ILVF), 82–102 (VTVP…VLTL), 126–146 (VTYV…TILL), and 157–177 (LLAC…WAFV).

It belongs to the CDP-alcohol phosphatidyltransferase class-I family.

It localises to the cell membrane. It catalyses the reaction a CDP-1,2-diacyl-sn-glycerol + a 1,2-diacyl-sn-glycero-3-phospho-(1'-sn-glycerol) = a cardiolipin + CMP + H(+). It participates in lipid metabolism; phospholipid metabolism. Its function is as follows. May catalyze the biosynthesis of cardiolipin from phosphatidylglycerol (PG) and CDP-diacylglycerol. The protein is Putative cardiolipin synthase of Mycobacterium bovis (strain ATCC BAA-935 / AF2122/97).